We begin with the raw amino-acid sequence, 748 residues long: Phosphoenolpyruvate-dependent phosphotransferase system (748 aa).

Positions 1-127 constitute a GAF domain; sequence MLTRLREIVE…RRQLLGVLVV (127 aa). The interval 128–170 is linker; the sequence is QQRELRQYDESEESFLVTLATQMAAILSQSQLTALFGQYRQTR. Positions 171-748 are PTS EI; sequence IRALPAAPGV…GMGGLIRGGL (578 aa). Catalysis depends on His-356, which acts as the Tele-phosphohistidine intermediate. The phosphoenolpyruvate site is built by Arg-462 and Arg-498. Mg(2+) contacts are provided by Glu-597 and Asp-621. Phosphoenolpyruvate contacts are provided by residues 620–621 and Arg-631; that span reads ND. Cys-668 serves as the catalytic Proton donor.

This sequence belongs to the PEP-utilizing enzyme family. It depends on Mg(2+) as a cofactor.

Its subcellular location is the cytoplasm. The catalysed reaction is L-histidyl-[protein] + phosphoenolpyruvate = N(pros)-phospho-L-histidyl-[protein] + pyruvate. With respect to regulation, inhibited by GDP and FAD. Its function is as follows. Component of the phosphoenolpyruvate-dependent nitrogen-metabolic phosphotransferase system (nitrogen-metabolic PTS), that seems to be involved in regulating nitrogen metabolism. Enzyme I-Ntr transfers the phosphoryl group from phosphoenolpyruvate (PEP) to the phosphoryl carrier protein (NPr). Could function in the transcriptional regulation of sigma-54 dependent operons in conjunction with the NPr (PtsO) and EIIA-Ntr (PtsN) proteins. Enzyme I-Ntr is specific for NPr. This Escherichia coli (strain K12) protein is Phosphoenolpyruvate-dependent phosphotransferase system (ptsP).